Reading from the N-terminus, the 225-residue chain is Membrane protein (225 aa).

The Virion surface portion of the chain corresponds to 1-20; sequence MSNETNCTLDFEQSVELFKE. Residues 21–41 form a helical membrane-spanning segment; sequence YNLFITAFLLFLTIILQYGYA. Over 42–51 the chain is Intravirion; sequence TRSKFIYILK. A helical membrane pass occupies residues 52–72; it reads MIVLWCFWPLNIAVGVISCIY. The Virion surface segment spans residues 73–77; that stretch reads PPNTG. Residues 78–98 form a helical membrane-spanning segment; it reads GLVAAIILTVFACLSFVGYWI. Topologically, residues 99–225 are intravirion; it reads QSIRLFKRCR…VATGGSSLYT (127 aa).

It belongs to the gammacoronaviruses M protein family. As to quaternary structure, homomultimer. Interacts with envelope E protein in the budding compartment of the host cell, which is located between endoplasmic reticulum and the Golgi complex. Forms a complex with HE and S proteins. Interacts with nucleocapsid N protein. This interaction probably participates in RNA packaging into the virus.

The protein localises to the virion membrane. Its subcellular location is the host Golgi apparatus membrane. Its function is as follows. Component of the viral envelope that plays a central role in virus morphogenesis and assembly via its interactions with other viral proteins. In Gallus gallus (Chicken), this protein is Membrane protein.